The following is a 434-amino-acid chain: Putative D-alanyl-D-alanine carboxypeptidase (434 aa).

Residues 7 to 25 traverse the membrane as a helical; Signal-anchor segment; that stretch reads YLSLLAVSCSVSAAKYPVL.

It belongs to the peptidase S12 family. YfeW subfamily.

It is found in the cell inner membrane. It carries out the reaction Preferential cleavage: (Ac)2-L-Lys-D-Ala-|-D-Ala. Also transpeptidation of peptidyl-alanyl moieties that are N-acyl substituents of D-alanine.. This is Putative D-alanyl-D-alanine carboxypeptidase from Escherichia coli O157:H7.